The following is an 812-amino-acid chain: Phosphoenolpyruvate synthase (812 aa).

Catalysis depends on His430, which acts as the Tele-phosphohistidine intermediate. Substrate-binding residues include Arg520, Arg588, Glu690, Gly711, Ser712, Asn713, and Asp714. Glu690 provides a ligand contact to Mg(2+). Asp714 lines the Mg(2+) pocket. Cys761 (proton donor) is an active-site residue.

The protein belongs to the PEP-utilizing enzyme family. Requires Mg(2+) as cofactor.

It catalyses the reaction pyruvate + ATP + H2O = phosphoenolpyruvate + AMP + phosphate + 2 H(+). It functions in the pathway carbohydrate biosynthesis; gluconeogenesis. Catalyzes the phosphorylation of pyruvate to phosphoenolpyruvate. This chain is Phosphoenolpyruvate synthase (ppsA), found in Helicobacter pylori (strain ATCC 700392 / 26695) (Campylobacter pylori).